The following is an 890-amino-acid chain: Translation initiation factor IF-2 (890 aa).

Residues 45 to 304 (LIDHLNQKNS…LQQGFQKPAQ (260 aa)) are disordered. A compositionally biased stretch (polar residues) spans 67–81 (STLNIPGTGGKSKSV). The segment covering 92-217 (VKRDPQEAER…RMAEENKWTD (126 aa)) has biased composition (basic and acidic residues). Positions 252 to 266 (GRGRNAKAARPKKGN) are enriched in basic residues. The segment covering 267 to 280 (KHAESKADREEARA) has biased composition (basic and acidic residues). One can recognise a tr-type G domain in the interval 389–558 (PRAPVVTIMG…LLQAEVLELK (170 aa)). The segment at 398 to 405 (GHVDHGKT) is G1. GTP is bound at residue 398–405 (GHVDHGKT). The segment at 423–427 (GITQH) is G2. The tract at residues 444-447 (DTPG) is G3. Residues 444-448 (DTPGH) and 498-501 (NKID) contribute to the GTP site. Positions 498 to 501 (NKID) are G4. The segment at 534 to 536 (SAK) is G5. N6-acetyllysine is present on Lys-808.

Belongs to the TRAFAC class translation factor GTPase superfamily. Classic translation factor GTPase family. IF-2 subfamily.

Its subcellular location is the cytoplasm. Functionally, one of the essential components for the initiation of protein synthesis. Protects formylmethionyl-tRNA from spontaneous hydrolysis and promotes its binding to the 30S ribosomal subunits. Also involved in the hydrolysis of GTP during the formation of the 70S ribosomal complex. In Escherichia coli O127:H6 (strain E2348/69 / EPEC), this protein is Translation initiation factor IF-2.